Consider the following 476-residue polypeptide: Bifunctional protein HldE (476 aa).

The interval 1–318 is ribokinase; it reads MKVTLPDFRR…ENAIRGRAET (318 aa). 195 to 198 contributes to the ATP binding site; it reads NLSE. Asp264 is an active-site residue. The cytidylyltransferase stretch occupies residues 344–476; the sequence is MTNGIFDILH…IIQSIKNGRG (133 aa).

This sequence in the N-terminal section; belongs to the carbohydrate kinase PfkB family. It in the C-terminal section; belongs to the cytidylyltransferase family. In terms of assembly, homodimer.

It carries out the reaction D-glycero-beta-D-manno-heptose 7-phosphate + ATP = D-glycero-beta-D-manno-heptose 1,7-bisphosphate + ADP + H(+). It catalyses the reaction D-glycero-beta-D-manno-heptose 1-phosphate + ATP + H(+) = ADP-D-glycero-beta-D-manno-heptose + diphosphate. It functions in the pathway nucleotide-sugar biosynthesis; ADP-L-glycero-beta-D-manno-heptose biosynthesis; ADP-L-glycero-beta-D-manno-heptose from D-glycero-beta-D-manno-heptose 7-phosphate: step 1/4. Its pathway is nucleotide-sugar biosynthesis; ADP-L-glycero-beta-D-manno-heptose biosynthesis; ADP-L-glycero-beta-D-manno-heptose from D-glycero-beta-D-manno-heptose 7-phosphate: step 3/4. In terms of biological role, catalyzes the phosphorylation of D-glycero-D-manno-heptose 7-phosphate at the C-1 position to selectively form D-glycero-beta-D-manno-heptose-1,7-bisphosphate. Functionally, catalyzes the ADP transfer from ATP to D-glycero-beta-D-manno-heptose 1-phosphate, yielding ADP-D-glycero-beta-D-manno-heptose. The protein is Bifunctional protein HldE of Yersinia pseudotuberculosis serotype O:1b (strain IP 31758).